The chain runs to 1086 residues: NAD(P) transhydrogenase, mitochondrial (1086 aa).

The N-terminal 43 residues, 1–43 (MANLLKTVVTGCSCPFLSNLGSCKVLPGKKNFLRTFHTHRILW), are a transit peptide targeting the mitochondrion. At 44–474 (CSAPVKPGIP…TITPFRKTMT (431 aa)) the chain is on the mitochondrial matrix side. The residue at position 70 (K70) is an N6-acetyllysine. The residue at position 117 (K117) is an N6-succinyllysine. 182 to 184 (RVT) contacts NAD(+). At K224 the chain carries N6-succinyllysine. Residues V237, 257–259 (DTR), and G287 contribute to the NAD(+) site. At K294 the chain carries N6-succinyllysine. E300 and L319 together coordinate NAD(+). K331 carries the post-translational modification N6-succinyllysine. K397 carries the N6-acetyllysine modification. Helical transmembrane passes span 475–493 (SASV…GIAA), 501–521 (MVTT…GVTP), 527–546 (LMSV…LVLM), and 558–578 (GLAA…FLVT). Residues 579–595 (QRMLDMFKRPTDPPEYN) lie on the Mitochondrial matrix side of the membrane. 5 consecutive transmembrane segments (helical) span residues 596–616 (YLYL…LYSG), 622–642 (IMYL…STQG), 646–666 (LGNA…LGGL), 672–691 (LLAQ…LTIA), and 702–722 (LVAA…IAEY). The Cytoplasmic portion of the chain corresponds to 723 to 739 (IIEYPHFATDAAANLTK). 5 helical membrane passes run 740-760 (IVAY…LVAY), 778-797 (HLLN…PFMM), 801-819 (FTTG…AVMG), 833-853 (VVIT…GFLL), and 857-879 (LLTI…MCVA). The Mitochondrial matrix segment spans residues 880–1086 (MNRSLANVIL…QAKVRESYQK (207 aa)). Residues Y933, 965 to 970 (VAGRMP), 1009 to 1011 (NDT), 1026 to 1027 (GM), 1042 to 1049 (KRSLGVGY), and 1068 to 1069 (DA) each bind NADP(+). K1079 carries the N6-succinyllysine modification.

The protein in the N-terminal section; belongs to the AlaDH/PNT family. In the C-terminal section; belongs to the PNT beta subunit family. In terms of assembly, homodimer.

The protein resides in the mitochondrion inner membrane. It carries out the reaction NAD(+) + NADPH + H(+)(in) = NADH + NADP(+) + H(+)(out). Its function is as follows. The transhydrogenation between NADH and NADP is coupled to respiration and ATP hydrolysis and functions as a proton pump across the membrane. May play a role in reactive oxygen species (ROS) detoxification in the adrenal gland. This chain is NAD(P) transhydrogenase, mitochondrial (NNT), found in Bos taurus (Bovine).